The sequence spans 548 residues: Spindle pole body-associated protein cut12 (548 aa).

The interval 122–325 (FKSPLLQSTP…GQQSKYKGKE (204 aa)) is interaction with plo1. The disordered stretch occupies residues 123–182 (KSPLLQSTPKPNINNPDNENKSKHDEFDNRYNININESYKNETKSNQRLGEDVPSKKKYP). The segment covering 126 to 139 (LLQSTPKPNINNPD) has biased composition (polar residues). 2 stretches are compositionally biased toward basic and acidic residues: residues 140 to 151 (NENKSKHDEFDN) and 161 to 182 (YKNETKSNQRLGEDVPSKKKYP). The stretch at 261-312 (KQKFSMLDSAHSDLELELTSIRERLESLILEKQEEINFWKQRCRALETEKIH) forms a coiled coil. Residues 344-356 (PITTKVVSRPSQS) are compositionally biased toward polar residues. 2 disordered regions span residues 344–369 (PITTKVVSRPSQSDVREPQEQVPSKN) and 510–548 (SRVDYDLKSPNQRTANAKKRLEERRRRRKLKLQELQLNS). The stretch at 522–548 (RTANAKKRLEERRRRRKLKLQELQLNS) forms a coiled coil.

In terms of assembly, self-associates. Interacts with plo1.

Its subcellular location is the cytoplasm. The protein resides in the cytoskeleton. The protein localises to the microtubule organizing center. It localises to the spindle pole body. Its function is as follows. Required for bipolar spindle formation. May act as a regulator of the p34cdc2/cyclin B kinase. Required for full activation of the plo1 kinase. However, in cut12.1 cells at restrictive temperature the H1 kinase does rise concomitant with entry into mitosis, indicating that cut12 is not required for activation of p34cdc2/cyclin B. The cut12.s11 allele may promote cdc2-independent phosphorylation of SPB proteins thereby overcoming the requirement for cdc25 in cell cycle progression. The chain is Spindle pole body-associated protein cut12 (cut12) from Schizosaccharomyces pombe (strain 972 / ATCC 24843) (Fission yeast).